Consider the following 321-residue polypeptide: Lipoyl synthase (321 aa).

Residues Cys68, Cys73, Cys79, Cys94, Cys98, Cys101, and Ser308 each coordinate [4Fe-4S] cluster. Positions 80–297 constitute a Radical SAM core domain; the sequence is FNHGTATFMI…KEQALAMGFT (218 aa).

Belongs to the radical SAM superfamily. Lipoyl synthase family. [4Fe-4S] cluster is required as a cofactor.

It is found in the cytoplasm. The enzyme catalyses [[Fe-S] cluster scaffold protein carrying a second [4Fe-4S](2+) cluster] + N(6)-octanoyl-L-lysyl-[protein] + 2 oxidized [2Fe-2S]-[ferredoxin] + 2 S-adenosyl-L-methionine + 4 H(+) = [[Fe-S] cluster scaffold protein] + N(6)-[(R)-dihydrolipoyl]-L-lysyl-[protein] + 4 Fe(3+) + 2 hydrogen sulfide + 2 5'-deoxyadenosine + 2 L-methionine + 2 reduced [2Fe-2S]-[ferredoxin]. The protein operates within protein modification; protein lipoylation via endogenous pathway; protein N(6)-(lipoyl)lysine from octanoyl-[acyl-carrier-protein]: step 2/2. Catalyzes the radical-mediated insertion of two sulfur atoms into the C-6 and C-8 positions of the octanoyl moiety bound to the lipoyl domains of lipoate-dependent enzymes, thereby converting the octanoylated domains into lipoylated derivatives. This chain is Lipoyl synthase, found in Proteus mirabilis (strain HI4320).